The following is a 120-amino-acid chain: Large ribosomal subunit protein bL17 (120 aa).

It belongs to the bacterial ribosomal protein bL17 family. In terms of assembly, part of the 50S ribosomal subunit. Contacts protein L32.

The sequence is that of Large ribosomal subunit protein bL17 from Bacillus licheniformis (strain ATCC 14580 / DSM 13 / JCM 2505 / CCUG 7422 / NBRC 12200 / NCIMB 9375 / NCTC 10341 / NRRL NRS-1264 / Gibson 46).